The sequence spans 104 residues: Small ribosomal subunit protein uS10 (104 aa).

Belongs to the universal ribosomal protein uS10 family. Part of the 30S ribosomal subunit.

Functionally, involved in the binding of tRNA to the ribosomes. This chain is Small ribosomal subunit protein uS10, found in Hydrogenobaculum sp. (strain Y04AAS1).